The chain runs to 380 residues: MTIIEERATDTGMATVPLPAEGEIGLVHIGALTLENGTVLPDVTIAVQRWGELAPDRGNVVMVLHALTGDSHVTGPAGDGHPTAGWWDGVAGPGAPIDTDHWCAIATNVLGGCRGSTGPGSLAPDGKPWGSRFPQITIRDQVAADRAALAALGITEVAAVVGGSMGGARALEWLVTHPDDVRAGLVLAVGARATADQIGTQSTQVAAIKADPDWQGGDYHGTGRAPTEGMEIARRFAHLTYRGEEELDDRFANTPQDDEDPLTGGRYAVQSYLEYQGGKLARRFDPGTYVVLSDALSSHDVGRGRGGVEAALRSCPVPVVVGGITSDRLYPIRLQQELAELLPGCQGLDVVDSIYGHDGFLVETELVGKLIRRTLELAQR.

The AB hydrolase-1 domain maps to 59–363; that stretch reads NVVMVLHALT…IYGHDGFLVE (305 aa). Serine 164 acts as the Nucleophile in catalysis. Arginine 234 lines the substrate pocket. Catalysis depends on residues aspartate 327 and histidine 357. Substrate is bound at residue aspartate 358.

It belongs to the AB hydrolase superfamily. MetX family. In terms of assembly, homodimer.

The protein localises to the cytoplasm. It carries out the reaction L-homoserine + acetyl-CoA = O-acetyl-L-homoserine + CoA. Its pathway is amino-acid biosynthesis; L-methionine biosynthesis via de novo pathway; O-acetyl-L-homoserine from L-homoserine: step 1/1. In terms of biological role, transfers an acetyl group from acetyl-CoA to L-homoserine, forming acetyl-L-homoserine. This Mycolicibacterium smegmatis (strain ATCC 700084 / mc(2)155) (Mycobacterium smegmatis) protein is Homoserine O-acetyltransferase.